Reading from the N-terminus, the 485-residue chain is Sodium-coupled neutral amino acid symporter 1 (485 aa).

Residues 1 to 74 (MMHFKSGLEL…EYIPGTTSLG (74 aa)) are Cytoplasmic-facing. Phosphoserine is present on serine 6. Position 11 is a phosphothreonine (threonine 11). A phosphoserine mark is found at serine 25, serine 28, serine 49, and serine 52. Threonine 54 bears the Phosphothreonine mark. The residue at position 56 (serine 56) is a Phosphoserine. Residues 75–97 (MSVFNLSNAIMGSGILGLAFALA) traverse the membrane as a helical segment. The Extracellular segment spans residues 98 to 112 (NTGILLFLILLTSVT). Residues 113-133 (LLSIYSINLLLICSKETGCMV) form a helical membrane-spanning segment. Residues 134–148 (YEKLGEQVFGTTGKL) lie on the Cytoplasmic side of the membrane. A helical transmembrane segment spans residues 149–169 (VIFGATSLQNTGAMLSYLFIV). Residues 170-188 (KNELPSAIKSLMGEEETFS) lie on the Extracellular side of the membrane. A helical membrane pass occupies residues 189–211 (AWYVDGRVLVVMVTFGIILPLCL). Over 212 to 216 (LKNLG) the chain is Cytoplasmic. Residues 217 to 237 (YLGYTSGFSLSCMVFFLIVVI) traverse the membrane as a helical segment. The Extracellular segment spans residues 238–273 (YKKFQIPCMNGEQNSTVSANVTDACTPKYVTFNSKT). A disulfide bridge links cysteine 245 with cysteine 262. Residues asparagine 251 and asparagine 257 are each glycosylated (N-linked (GlcNAc...) asparagine). Residues 274–294 (VYALPTIAFAFVCHPSVLPIY) form a helical membrane-spanning segment. Topologically, residues 295-310 (SELKDRSQKKMQMVSN) are cytoplasmic. The chain crosses the membrane as a helical span at residues 311-331 (ISFFAMFVMYFLTAIFGYLTF). Topologically, residues 332-348 (YEKVQSDLLHKYQSTGD) are extracellular. The helical transmembrane segment at 349-369 (ILILTVRLAVIVAVILTVPVL) threads the bilayer. Residues 370–391 (FFTVRSSLFELAKKTKFHLCRH) are Cytoplasmic-facing. Residues 392–412 (VLVTIILLVIINLLVIFIPSM) traverse the membrane as a helical segment. Residues 413 to 414 (KD) lie on the Extracellular side of the membrane. A helical transmembrane segment spans residues 415–435 (IFGVVGVTSANMLIFILPSSL). Over 436-450 (YLKITNQDGDKNTQR) the chain is Cytoplasmic. Residues 451–471 (IWAALFLALGVLFSLISIPLV) traverse the membrane as a helical segment. Residues 472–485 (IYDWACSSSNGEGH) lie on the Extracellular side of the membrane.

Belongs to the amino acid/polyamine transporter 2 family. In terms of processing, N-glycosylation plays an important role in the L-glutamine transport. Specifically expressed in brain with the highest levels in cerebellum and thalamus (at protein level). Expressed in glutamatergic, GABAergic and a subset of dopaminergic neurons of the substantia nigra and cholinergic motoneurons (at protein level). Also expressed by ependymal cells lining the ventricle (at protein level). Expression is also detected in spinal cord, heart, colon and placenta.

The protein resides in the cell membrane. The enzyme catalyses L-glutamine(in) + Na(+)(in) = L-glutamine(out) + Na(+)(out). It catalyses the reaction L-alanine(in) + Na(+)(in) = L-alanine(out) + Na(+)(out). It carries out the reaction L-asparagine(in) + Na(+)(in) = L-asparagine(out) + Na(+)(out). The catalysed reaction is L-histidine(in) + Na(+)(in) = L-histidine(out) + Na(+)(out). The enzyme catalyses L-serine(in) + Na(+)(in) = L-serine(out) + Na(+)(out). It catalyses the reaction L-cysteine(in) + Na(+)(in) = L-cysteine(out) + Na(+)(out). It carries out the reaction L-methionine(in) + Na(+)(in) = L-methionine(out) + Na(+)(out). The catalysed reaction is glycine(in) + Na(+)(in) = glycine(out) + Na(+)(out). The enzyme catalyses L-threonine(in) + Na(+)(in) = L-threonine(out) + Na(+)(out). It catalyses the reaction L-proline(in) + Na(+)(in) = L-proline(out) + Na(+)(out). Its activity is regulated as follows. Inhibited by alpha-(methylamino)isobutyric acid (MeAIB). Inhibited by lithium, potassium, choline ions, N-methylglucamine. The pH dependence has an allosteric effect on the transport. Its function is as follows. Symporter that cotransports short-chain neutral amino acids and sodium ions from the extraccellular to the intracellular side of the cell membrane. The transport is elctrogenic, pH dependent and driven by the Na(+) electrochemical gradient. Participates in the astroglia-derived glutamine transport into GABAergic interneurons for neurotransmitter GABA de novo synthesis. May also contributes to amino acid transport in placental trophoblast. Regulates synaptic plasticity. The sequence is that of Sodium-coupled neutral amino acid symporter 1 from Rattus norvegicus (Rat).